Consider the following 807-residue polypeptide: MYSSSRKRCPKTKWALKLLTAAFLAASPAAKSAVNNAYDALIIEARKGNTQPALSWFALKSALSNNQIADWLQIALWAGQDKQVITVYNRYRHQQLPARGYAAVAVAYRNLQQWQNSLTLWQKALSLEPQNKDYQRGQILTLADAGHYDTALVKLKQLNSGAPDKANLLAEAYIYKLAGRHQDELRAMTESLPENASTQQYPTEYVQALRNNQLAAAIDDANLTPDIRADIHAELVRLSFMPTRSESERYAIADRALAQYAALEILWHDNPDRTAQYQRIQVDHLGALLTRDRYKDVISHYQRLKKTGQIIPPWGQYWVASAYLKDHQPKKAQSIMTELFYHKETIAPDLSDEELADLFYSHLESENYPGALTVTQHTINTSPPFLRLMGTPTSIPNDTWLQGHSFLSTVAKYSNDLPQAEMTARELAYNAPGNQGLRIDYASVLQARGWPRAAENELKKAEVIEPRNINLEVEQAWTALTLQEWQQAAVLTHDVVEREPQDPGVVRLKRAVDVHNLAELRIAGSTGIDAEGPDSGKHDVDLTTIVYSPPLKDNWRGFAGFGYADGQFSEGKGIVRDWLAGVEWRSRNIWLEAEYAERVFNHEHKPGARLSGWYDFNDNWRIGSQLERLSHRVPLRAMKNGVTGNSAQAYVRWYQNERRKYGVSWAFTDFSDSNQRHEVSLEGQERIWSSPYLIVDFLPSLYYEQNTEHDTPYYNPIKTFDIVPAFEASHLLWRSYENSWEQIFSAGVGASWQKHYGTDVVTQLGYGQRISWNDVIDAGATLRWEKRPYDGDREHNLYVEFDMTFRF.

The N-terminal stretch at 1–26 (MYSSSRKRCPKTKWALKLLTAAFLAA) is a signal peptide. 3 TPR repeats span residues 98–131 (ARGY…EPQN), 165–198 (KANL…NAST), and 279–311 (RIQV…GQII).

It localises to the cell outer membrane. Its function is as follows. Exports the biofilm adhesin polysaccharide poly-beta-1,6-N-acetyl-D-glucosamine (PGA) across the outer membrane. The PGA transported seems to be partially N-deacetylated since N-deacetylation of PGA by PgaB is needed for PGA export through the PgaA porin. In Escherichia coli O157:H7, this protein is Poly-beta-1,6-N-acetyl-D-glucosamine export protein (pgaA).